A 589-amino-acid chain; its full sequence is Zinc finger protein 131 (589 aa).

The BTB domain occupies 34–98; the sequence is TDITLIVDGH…TYTAKLMIQG (65 aa). A Nuclear localization signal 1 motif is present at residues 137–148; it reads TGKNEAKKRKIA. A compositionally biased stretch (basic and acidic residues) spans 224-234; that stretch reads GDRKGQIKEDG. Residues 224–247 are disordered; that stretch reads GDRKGQIKEDGCPSDPTSKQEHMK. 2 C2H2-type zinc fingers span residues 254-277 and 294-316; these read FKCEICNKRYLRESAWKQHLNCYH and HVCQYCEKQFDHFGHFKEHLRKH. Glycyl lysine isopeptide (Lys-Gly) (interchain with G-Cter in SUMO2) cross-links involve residues lysine 255 and lysine 261. The Nuclear localization signal 2 motif lies at 283-294; sequence VSKKQRTGKKIH. The segment at 322-347 adopts a C2H2-type 3; degenerate zinc-finger fold; that stretch reads FECPNCHERFARNSTLKCHLTACQTG. C2H2-type zinc fingers lie at residues 358-380 and 386-409; these read YECQVCNSVFNSWDQFKDHLVIH and NHCTLCDLWFMQGNELRRHLSDAH. A compositionally biased stretch (basic and acidic residues) spans 539 to 583; the sequence is NQEERESSQADAAEAAREDHEDAEDLETKPTVDSEAEKAENEDRT. The tract at residues 539 to 589 is disordered; the sequence is NQEERESSQADAAEAAREDHEDAEDLETKPTVDSEAEKAENEDRTAMPVLE. Lysine 567 is covalently cross-linked (Glycyl lysine isopeptide (Lys-Gly) (interchain with G-Cter in SUMO)).

This sequence belongs to the krueppel C2H2-type zinc-finger protein family. Monosumoylated at Lys-567 by CBX4 and UHRF2. Sumoylation may potentiate ZNF131 inhibition of estrogen signaling. Sumoylation does not interfere with ubiquitination. Post-translationally, ubiquitinated.

The protein localises to the nucleus. May be involved in transcriptional regulation as a repressor of ESR1/ER-alpha signaling. Plays a role during development and organogenesis as well as in the function of the adult central nervous system. This chain is Zinc finger protein 131 (ZNF131), found in Pongo abelii (Sumatran orangutan).